Here is a 525-residue protein sequence, read N- to C-terminus: GMP synthase [glutamine-hydrolyzing] (525 aa).

In terms of domain architecture, Glutamine amidotransferase type-1 spans 16–205; sequence PVLVVDFGAQ…LHDFAGLGAQ (190 aa). Residue Cys93 is the Nucleophile of the active site. Active-site residues include His179 and Glu181. In terms of domain architecture, GMPS ATP-PPase spans 206–399; the sequence is WTPANIANAL…LGLPEEIVAR (194 aa). ATP is bound at residue 233–239; that stretch reads SGGVDSA.

In terms of assembly, homodimer.

The enzyme catalyses XMP + L-glutamine + ATP + H2O = GMP + L-glutamate + AMP + diphosphate + 2 H(+). It functions in the pathway purine metabolism; GMP biosynthesis; GMP from XMP (L-Gln route): step 1/1. Functionally, catalyzes the synthesis of GMP from XMP. In Mycobacterium bovis (strain BCG / Pasteur 1173P2), this protein is GMP synthase [glutamine-hydrolyzing].